Reading from the N-terminus, the 132-residue chain is Fluoride-specific ion channel FluC 1 (132 aa).

The next 4 helical transmembrane spans lie at 11 to 31, 37 to 57, 70 to 92, and 105 to 125; these read AVFA…ALAI, WPWP…YFTT, RPLL…VETI, and AYSV…TVLV. Glycine 79 and threonine 82 together coordinate Na(+).

This sequence belongs to the fluoride channel Fluc/FEX (TC 1.A.43) family.

The protein localises to the cell membrane. It catalyses the reaction fluoride(in) = fluoride(out). With respect to regulation, na(+) is not transported, but it plays an essential structural role and its presence is essential for fluoride channel function. Its function is as follows. Fluoride-specific ion channel. Important for reducing fluoride concentration in the cell, thus reducing its toxicity. The chain is Fluoride-specific ion channel FluC 1 from Mycobacterium bovis (strain ATCC BAA-935 / AF2122/97).